We begin with the raw amino-acid sequence, 474 residues long: B-cell CLL/lymphoma 6 member B protein (474 aa).

The region spanning 38–105 is the BTB domain; that stretch reads TDVTLLVGGQ…MYTSRLRLSP (68 aa). Disordered regions lie at residues 144 to 190 and 210 to 249; these read PVEV…PDPK and GSLV…GLQS. The span at 150-160 shows a compositional bias: pro residues; it reads PRPPTVAPPGS. Residues 162–172 are compositionally biased toward basic and acidic residues; sequence RRSEGHPDPPT. Polar residues-rich tracts occupy residues 173–183, 210–220, and 240–249; these read ESRSCSQGSPS, GSLVGESSGQP, and EEGTTPGLQS. C2H2-type zinc fingers lie at residues 323-345, 351-373, 379-401, 407-429, and 435-458; these read YKCQ…RTVH, YRCS…SRIH, YKCE…VLIH, YPCP…VRIH, and YHCD…RQKH.

Associates with BCL6 through the BTB domain. Ubiquitously expressed with higher expression found in heart and lung.

Its subcellular location is the nucleus. Acts as a sequence-specific transcriptional repressor in association with BCL6. Necessary for activation of naive T-cells to antigenic stimulation. May attenuate the regulatory effect of BCL6 on antigenic activation of naive CD4 T-cells by forming a heterodimer with BCL6. This is B-cell CLL/lymphoma 6 member B protein (Bcl6b) from Mus musculus (Mouse).